The sequence spans 219 residues: Probable GTP-binding protein EngB (219 aa).

An EngB-type G domain is found at 24–207 (VQPEVAFAGR…HALIESWVRP (184 aa)). GTP-binding positions include 32–39 (GRSNAGKS), 59–63 (GRTQH), 81–84 (DLPG), 148–151 (TKCD), and 185–188 (LFSA). Mg(2+) is bound by residues serine 39 and threonine 61.

Belongs to the TRAFAC class TrmE-Era-EngA-EngB-Septin-like GTPase superfamily. EngB GTPase family. Mg(2+) is required as a cofactor.

In terms of biological role, necessary for normal cell division and for the maintenance of normal septation. This Burkholderia mallei (strain ATCC 23344) protein is Probable GTP-binding protein EngB.